The chain runs to 66 residues: MPKLKTKSGAKKRFKITGTGKVLYAQAGKRHGMIKRTTKQIRNLRGTTTLFEGDAANVKKFFLPNG.

This sequence belongs to the bacterial ribosomal protein bL35 family.

The protein is Large ribosomal subunit protein bL35 of Methylobacterium nodulans (strain LMG 21967 / CNCM I-2342 / ORS 2060).